The following is a 346-amino-acid chain: Protein FAF1 (346 aa).

Disordered stretches follow at residues 22 to 120 and 323 to 346; these read QFGS…LRSG and KRDI…KSRR. A compositionally biased stretch (basic and acidic residues) spans 31-65; the sequence is FEDKTKNIRTEVDTRDSSGDEIDNSDHGSDFKDGT. Acidic residues predominate over residues 72-85; that stretch reads SDEDSGNETAEENN.

In terms of assembly, interacts with KRR1.

Its subcellular location is the nucleus. It is found in the nucleolus. Its function is as follows. Required for pre-rRNA processing and 40S ribosomal subunit assembly. Seems to act in the processing of 35S rRNA at the A(0), A(1), and A(2) cleavage sites. The sequence is that of Protein FAF1 (FAF1) from Saccharomyces cerevisiae (strain ATCC 204508 / S288c) (Baker's yeast).